The chain runs to 260 residues: 3'-5' ssDNA/RNA exonuclease TatD (260 aa).

E91, H127, and H152 together coordinate a divalent metal cation.

Belongs to the metallo-dependent hydrolases superfamily. TatD-type hydrolase family. TatD subfamily. In terms of assembly, monomer. Mg(2+) is required as a cofactor.

It is found in the cytoplasm. 3'-5' exonuclease that prefers single-stranded DNA and RNA. May play a role in the H(2)O(2)-induced DNA damage repair. The polypeptide is 3'-5' ssDNA/RNA exonuclease TatD (Escherichia fergusonii (strain ATCC 35469 / DSM 13698 / CCUG 18766 / IAM 14443 / JCM 21226 / LMG 7866 / NBRC 102419 / NCTC 12128 / CDC 0568-73)).